The sequence spans 517 residues: Probable bifunctional methylthioribulose-1-phosphate dehydratase/enolase-phosphatase E1 (517 aa).

Residues 1–242 are methylthioribulose-1-phosphate dehydratase; that stretch reads MACGGCSCEA…CIKLYQLGID (242 aa). A substrate-binding site is contributed by cysteine 114. Zn(2+) is bound by residues histidine 132 and histidine 134. Glutamate 157 (proton donor/acceptor; for methylthioribulose-1-phosphate dehydratase activity) is an active-site residue. Residue histidine 207 coordinates Zn(2+). Residues 278-517 form an enolase-phosphatase E1 region; the sequence is VVLDIEGTTT…FRTIKSFSEI (240 aa). Mg(2+) contacts are provided by aspartate 281 and glutamate 283. Substrate contacts are provided by residues 416 to 417 and lysine 450; that span reads SS. Residue aspartate 476 participates in Mg(2+) binding.

It in the N-terminal section; belongs to the aldolase class II family. MtnB subfamily. In the C-terminal section; belongs to the HAD-like hydrolase superfamily. MasA/MtnC family. It depends on Zn(2+) as a cofactor. The cofactor is Mg(2+).

The catalysed reaction is 5-(methylsulfanyl)-D-ribulose 1-phosphate = 5-methylsulfanyl-2,3-dioxopentyl phosphate + H2O. It carries out the reaction 5-methylsulfanyl-2,3-dioxopentyl phosphate + H2O = 1,2-dihydroxy-5-(methylsulfanyl)pent-1-en-3-one + phosphate. Its pathway is amino-acid biosynthesis; L-methionine biosynthesis via salvage pathway; L-methionine from S-methyl-5-thio-alpha-D-ribose 1-phosphate: step 2/6. The protein operates within amino-acid biosynthesis; L-methionine biosynthesis via salvage pathway; L-methionine from S-methyl-5-thio-alpha-D-ribose 1-phosphate: step 3/6. It functions in the pathway amino-acid biosynthesis; L-methionine biosynthesis via salvage pathway; L-methionine from S-methyl-5-thio-alpha-D-ribose 1-phosphate: step 4/6. The protein is Probable bifunctional methylthioribulose-1-phosphate dehydratase/enolase-phosphatase E1 of Sorghum bicolor (Sorghum).